A 673-amino-acid polypeptide reads, in one-letter code: DNA ligase (673 aa).

Residues 35–39 (DAEYD), 84–85 (SL), and E115 each bind NAD(+). K117 functions as the N6-AMP-lysine intermediate in the catalytic mechanism. R138, E175, K292, and K316 together coordinate NAD(+). 4 residues coordinate Zn(2+): C410, C413, C428, and C434. One can recognise a BRCT domain in the interval 592–673 (PRKLPLQGLV…FLDLLERGRP (82 aa)).

This sequence belongs to the NAD-dependent DNA ligase family. LigA subfamily. Mg(2+) serves as cofactor. Requires Mn(2+) as cofactor.

The catalysed reaction is NAD(+) + (deoxyribonucleotide)n-3'-hydroxyl + 5'-phospho-(deoxyribonucleotide)m = (deoxyribonucleotide)n+m + AMP + beta-nicotinamide D-nucleotide.. DNA ligase that catalyzes the formation of phosphodiester linkages between 5'-phosphoryl and 3'-hydroxyl groups in double-stranded DNA using NAD as a coenzyme and as the energy source for the reaction. It is essential for DNA replication and repair of damaged DNA. This Methylococcus capsulatus (strain ATCC 33009 / NCIMB 11132 / Bath) protein is DNA ligase.